A 163-amino-acid polypeptide reads, in one-letter code: MKVAVFPGSFDPITWGHIDLIKRSLAIFDKVVVLVAKNKSKKYLLSDVERFSLAKDVISSLNFLNVFVDRYSGFIVDYALINSIKFIVRGIRAFNDFDIEFERYLVNNKLNFKIDTIFLPSSAEHLYVRSDFVKELMMKKDVDLSHFVPELVFNRLKSKFIDK.

Serine 9 provides a ligand contact to substrate. Residues serine 9–phenylalanine 10 and histidine 17 each bind ATP. The substrate site is built by lysine 41, isoleucine 75, and arginine 89. ATP-binding positions include glycine 90 to arginine 92, glutamate 100, and histidine 125 to aspartate 131.

Belongs to the bacterial CoaD family. Homohexamer. The cofactor is Mg(2+).

It localises to the cytoplasm. It carries out the reaction (R)-4'-phosphopantetheine + ATP + H(+) = 3'-dephospho-CoA + diphosphate. It participates in cofactor biosynthesis; coenzyme A biosynthesis; CoA from (R)-pantothenate: step 4/5. Reversibly transfers an adenylyl group from ATP to 4'-phosphopantetheine, yielding dephospho-CoA (dPCoA) and pyrophosphate. The protein is Phosphopantetheine adenylyltransferase of Borrelia garinii subsp. bavariensis (strain ATCC BAA-2496 / DSM 23469 / PBi) (Borreliella bavariensis).